Here is an 89-residue protein sequence, read N- to C-terminus: Putative regulatory protein CLL_A1210 (89 aa).

It belongs to the RemA family.

This chain is Putative regulatory protein CLL_A1210, found in Clostridium botulinum (strain Eklund 17B / Type B).